The sequence spans 278 residues: Ribosomal RNA small subunit methyltransferase A (278 aa).

Residues N27, L29, G54, E75, D101, and N122 each coordinate S-adenosyl-L-methionine.

Belongs to the class I-like SAM-binding methyltransferase superfamily. rRNA adenine N(6)-methyltransferase family. RsmA subfamily.

The protein resides in the cytoplasm. The enzyme catalyses adenosine(1518)/adenosine(1519) in 16S rRNA + 4 S-adenosyl-L-methionine = N(6)-dimethyladenosine(1518)/N(6)-dimethyladenosine(1519) in 16S rRNA + 4 S-adenosyl-L-homocysteine + 4 H(+). Functionally, specifically dimethylates two adjacent adenosines (A1518 and A1519) in the loop of a conserved hairpin near the 3'-end of 16S rRNA in the 30S particle. May play a critical role in biogenesis of 30S subunits. This is Ribosomal RNA small subunit methyltransferase A from Brucella anthropi (strain ATCC 49188 / DSM 6882 / CCUG 24695 / JCM 21032 / LMG 3331 / NBRC 15819 / NCTC 12168 / Alc 37) (Ochrobactrum anthropi).